Consider the following 1011-residue polypeptide: Protein argonaute 1C (1011 aa).

The segment covering 1–11 (MASRRPTHRHH) has biased composition (basic residues). 2 disordered regions span residues 1-95 (MASR…SPLA) and 107-147 (RPSE…PLRP). 2 stretches are compositionally biased toward low complexity: residues 28 to 53 (ARYA…ARGA) and 61 to 92 (QQQQ…ASSS). The segment covering 127-140 (ATTTPHHIPSSSKS) has biased composition (polar residues). A PAZ domain is found at 352-462 (PVIDFVAQLL…LPMEVCKIVE (111 aa)). The Piwi domain occupies 638–959 (LLIGILPDNN…AAFRARFYME (322 aa)). Positions 963 to 982 (SDSSSVVSGPGVRGPLSGSS) are enriched in low complexity. The tract at residues 963 to 994 (SDSSSVVSGPGVRGPLSGSSTSRTRAPGGAAV) is disordered.

This sequence belongs to the argonaute family. Ago subfamily.

Probably involved in the RNA silencing pathway. May bind to short RNAs such as microRNAs (miRNAs) or short interfering RNAs (siRNAs), and represses the translation of mRNAs which are complementary to them. The protein is Protein argonaute 1C (AGO1C) of Oryza sativa subsp. japonica (Rice).